The primary structure comprises 611 residues: ANK repeat-containing protein nipk-1 (611 aa).

The stretch at 91–149 (NSKSKKKTENQETKEKDEEAEEKKDGPPKDDKELKMKKEKEQEDENAELDEQKKDGDLL) forms a coiled coil. Disordered stretches follow at residues 92–167 (SKSK…SHPY), 212–255 (ISAS…DTSR), and 280–333 (TKEE…LSPR). The span at 97-131 (KTENQETKEKDEEAEEKKDGPPKDDKELKMKKEKE) shows a compositional bias: basic and acidic residues. Polar residues-rich tracts occupy residues 212–223 (ISASTTPDTVLS), 239–255 (ESLQSPFSDISSADTSR), and 315–333 (GTCSGPTTPSFNQTRLSPR). ANK repeat units follow at residues 375-405 (DGDTPLHIVAAHNDLGKIYALCETLRKTMNE), 417-446 (FGETPLYVAVLQRSIEVVEYLLELGASPNS), 452-482 (VGDSPLHFATARGMNNMVEALLSKREIRVNE), 486-527 (DGQT…DPTI), and 532-561 (TGKTIVHHAVDKMDVELLDFLKTVVNEDTF).

The protein belongs to the iASPP family. As to expression, expressed in the nervous system.

Its function is as follows. Acts downstream of the receptor complex composed of ilcr-1 and ilcr-2, which is a signaling complex that modulates neuronal activity and animal behavior in response to sensory neuron input. Mediates signaling of the complex. In Caenorhabditis elegans, this protein is ANK repeat-containing protein nipk-1.